The following is a 161-amino-acid chain: Ribosome maturation factor RimP (161 aa).

Belongs to the RimP family.

Its subcellular location is the cytoplasm. Required for maturation of 30S ribosomal subunits. The polypeptide is Ribosome maturation factor RimP (Rickettsia africae (strain ESF-5)).